Consider the following 556-residue polypeptide: Dihydroxy-acid dehydratase (556 aa).

Aspartate 78 lines the Mg(2+) pocket. A [2Fe-2S] cluster-binding site is contributed by cysteine 119. Residues aspartate 120 and lysine 121 each contribute to the Mg(2+) site. Position 121 is an N6-carboxylysine (lysine 121). Cysteine 195 serves as a coordination point for [2Fe-2S] cluster. Residue glutamate 446 participates in Mg(2+) binding. The active-site Proton acceptor is serine 472.

The protein belongs to the IlvD/Edd family. Homodimer. It depends on [2Fe-2S] cluster as a cofactor. Mg(2+) serves as cofactor.

It catalyses the reaction (2R)-2,3-dihydroxy-3-methylbutanoate = 3-methyl-2-oxobutanoate + H2O. The enzyme catalyses (2R,3R)-2,3-dihydroxy-3-methylpentanoate = (S)-3-methyl-2-oxopentanoate + H2O. Its pathway is amino-acid biosynthesis; L-isoleucine biosynthesis; L-isoleucine from 2-oxobutanoate: step 3/4. It participates in amino-acid biosynthesis; L-valine biosynthesis; L-valine from pyruvate: step 3/4. In terms of biological role, functions in the biosynthesis of branched-chain amino acids. Catalyzes the dehydration of (2R,3R)-2,3-dihydroxy-3-methylpentanoate (2,3-dihydroxy-3-methylvalerate) into 2-oxo-3-methylpentanoate (2-oxo-3-methylvalerate) and of (2R)-2,3-dihydroxy-3-methylbutanoate (2,3-dihydroxyisovalerate) into 2-oxo-3-methylbutanoate (2-oxoisovalerate), the penultimate precursor to L-isoleucine and L-valine, respectively. In Desulfatibacillum aliphaticivorans, this protein is Dihydroxy-acid dehydratase.